The primary structure comprises 132 residues: Agouti-signaling protein (132 aa).

The signal sequence occupies residues 1 to 22; sequence MDVTRLLLATLLVFLCFFTAYS. N-linked (GlcNAc...) asparagine glycosylation occurs at Asn39. The disordered stretch occupies residues 62–88; that stretch reads ISRKEAEKKRSSKKEASMKKVARPRTP. Residues 63–79 show a composition bias toward basic and acidic residues; the sequence is SRKEAEKKRSSKKEASM. 5 disulfide bridges follow: Cys93–Cys108, Cys100–Cys114, Cys107–Cys125, Cys111–Cys132, and Cys116–Cys123. Positions 93-132 constitute an Agouti domain; sequence CVATRDSCKPPAPACCDPCASCQCRFFRSACSCRVLSLNC.

Its subcellular location is the secreted. Its function is as follows. Involved in the regulation of melanogenesis. The binding of ASP to MC1R precludes alpha-MSH initiated signaling and thus blocks production of cAMP, leading to a down-regulation of eumelanogenesis (brown/black pigment) and thus increasing synthesis of pheomelanin (yellow/red pigment). The chain is Agouti-signaling protein (ASIP) from Chlorocebus aethiops (Green monkey).